A 280-amino-acid polypeptide reads, in one-letter code: Probable formate transporter (280 aa).

Helical transmembrane passes span 33–49 (LSFV…LLAE), 67–83 (LVFG…VVIA), 116–133 (SWVF…VLAY), 177–195 (FWRA…YLAV), 204–219 (SFGI…CIGF), and 253–272 (LGNI…FTYL).

Belongs to the FNT transporter (TC 1.A.16) family.

The protein localises to the cell membrane. Functionally, may act as a formate transporter. The polypeptide is Probable formate transporter (fdhC) (Methanobacterium formicicum).